A 64-amino-acid polypeptide reads, in one-letter code: Alpha-like toxin Lqh6 (64 aa).

The 62-residue stretch at 2 to 63 (RDGYIAQPEN…GIIVDGVKCH (62 aa)) folds into the LCN-type CS-alpha/beta domain. 4 disulfide bridges follow: Cys12-Cys62, Cys16-Cys34, Cys20-Cys44, and Cys24-Cys46. The residue at position 64 (Lys64) is a Lysine amide.

This sequence belongs to the long (4 C-C) scorpion toxin superfamily. Sodium channel inhibitor family. Alpha subfamily. As to expression, expressed by the venom gland.

It is found in the secreted. Its function is as follows. Alpha toxins bind voltage-independently at site-3 of sodium channels (Nav) and inhibit the inactivation of the activated channels, thereby blocking neuronal transmission. This toxin is highly toxic to insects and mice, and inhibits the binding of alpha-toxin to cockroach neuronal membranes. The polypeptide is Alpha-like toxin Lqh6 (Leiurus hebraeus (Hebrew deathstalker scorpion)).